The following is a 382-amino-acid chain: (R,R)-butanediol dehydrogenase (382 aa).

Residue Cys-39 participates in Zn(2+) binding. Ser-63 carries the phosphoserine modification. 6 residues coordinate Zn(2+): His-73, Cys-103, Cys-120, Cys-123, Cys-131, and Glu-173.

The protein belongs to the zinc-containing alcohol dehydrogenase family. In terms of assembly, homodimer. Zn(2+) is required as a cofactor.

It localises to the cytoplasm. The enzyme catalyses (R,R)-butane-2,3-diol + NAD(+) = (R)-acetoin + NADH + H(+). Functionally, NAD-dependent (R,R)-butanediol dehydrogenase which catalyzes oxidation of (R,R)-butane-2,3-diol to (3R)-acetoin, of meso-butanediol to (3S)-acetoin, and reduction of acetoin. Allows the use of 2,3-butanediol as an aerobic carbon source. The chain is (R,R)-butanediol dehydrogenase (BDH1) from Saccharomyces cerevisiae (strain ATCC 204508 / S288c) (Baker's yeast).